A 284-amino-acid chain; its full sequence is Flavin-dependent thymidylate synthase (284 aa).

In terms of domain architecture, ThyX spans 27–237; it reads GFIRVVDYMG…PLAYNAFVEY (211 aa). FAD contacts are provided by residues threonine 73, 96–98, and glutamate 104; that span reads RHR. Residues 93–96 and 104–108 contribute to the dUMP site; these read QWIR and EYSAR. Positions 96–106 match the ThyX motif motif; it reads RHRTANVNEYS. The segment at 122 to 142 is disordered; sequence EQVAKQSDNNKQGSGEAFDPD. Polar residues predominate over residues 125–134; the sequence is AKQSDNNKQG. Arginine 176 serves as a coordination point for dUMP. FAD contacts are provided by residues 192–194 and histidine 198; that span reads DLH. Arginine 203 contacts dUMP. The active-site Involved in ionization of N3 of dUMP, leading to its activation is the arginine 203.

The protein belongs to the thymidylate synthase ThyX family. In terms of assembly, homotetramer. It depends on FAD as a cofactor.

The enzyme catalyses dUMP + (6R)-5,10-methylene-5,6,7,8-tetrahydrofolate + NADPH + H(+) = dTMP + (6S)-5,6,7,8-tetrahydrofolate + NADP(+). The protein operates within pyrimidine metabolism; dTTP biosynthesis. In terms of biological role, catalyzes the reductive methylation of 2'-deoxyuridine-5'-monophosphate (dUMP) to 2'-deoxythymidine-5'-monophosphate (dTMP) while utilizing 5,10-methylenetetrahydrofolate (mTHF) as the methyl donor, and NADPH and FADH(2) as the reductant. This Wolbachia pipientis wMel protein is Flavin-dependent thymidylate synthase.